Reading from the N-terminus, the 280-residue chain is Phosphate import ATP-binding protein PstB (280 aa).

In terms of domain architecture, ABC transporter spans 34-275 (IEVKNLNFFY…PARKETEDYI (242 aa)). Residue 66–73 (GPSGCGKS) coordinates ATP.

It belongs to the ABC transporter superfamily. Phosphate importer (TC 3.A.1.7) family. As to quaternary structure, the complex is composed of two ATP-binding proteins (PstB), two transmembrane proteins (PstC and PstA) and a solute-binding protein (PstS).

It localises to the cell inner membrane. It carries out the reaction phosphate(out) + ATP + H2O = ADP + 2 phosphate(in) + H(+). Part of the ABC transporter complex PstSACB involved in phosphate import. Responsible for energy coupling to the transport system. This Burkholderia mallei (strain ATCC 23344) protein is Phosphate import ATP-binding protein PstB.